The primary structure comprises 133 residues: ATP synthase epsilon chain (133 aa).

It belongs to the ATPase epsilon chain family. F-type ATPases have 2 components, CF(1) - the catalytic core - and CF(0) - the membrane proton channel. CF(1) has five subunits: alpha(3), beta(3), gamma(1), delta(1), epsilon(1). CF(0) has three main subunits: a, b and c.

The protein resides in the cell inner membrane. Functionally, produces ATP from ADP in the presence of a proton gradient across the membrane. This is ATP synthase epsilon chain from Paramagnetospirillum magneticum (strain ATCC 700264 / AMB-1) (Magnetospirillum magneticum).